We begin with the raw amino-acid sequence, 81 residues long: Exodeoxyribonuclease 7 small subunit (81 aa).

The protein belongs to the XseB family. Heterooligomer composed of large and small subunits.

It localises to the cytoplasm. It carries out the reaction Exonucleolytic cleavage in either 5'- to 3'- or 3'- to 5'-direction to yield nucleoside 5'-phosphates.. Its function is as follows. Bidirectionally degrades single-stranded DNA into large acid-insoluble oligonucleotides, which are then degraded further into small acid-soluble oligonucleotides. The polypeptide is Exodeoxyribonuclease 7 small subunit (Pseudomonas syringae pv. syringae (strain B728a)).